Here is a 618-residue protein sequence, read N- to C-terminus: Mitochondrial Rho GTPase 2 (618 aa).

Over 1 to 592 (MRRDVRILLL…ELHPSSFWLR (592 aa)) the chain is Cytoplasmic. Positions 2–168 (RRDVRILLLG…FYYAQKAVLH (167 aa)) constitute a Miro 1 domain. GTP-binding residues include Gly-16, Lys-17, Thr-18, and Ser-19. Thr-18 contributes to the Mg(2+) binding site. Pro-35 and Asp-57 together coordinate Mg(2+). Ser-59 serves as a coordination point for GTP. Lys-96 participates in a covalent cross-link: Glycyl lysine isopeptide (Lys-Gly) (interchain with G-Cter in ubiquitin). GTP-binding residues include Asn-118, Lys-119, Asp-121, Ala-149, and Lys-150. Residue Lys-119 forms a Glycyl lysine isopeptide (Lys-Gly) (interchain with G-Cter in ubiquitin) linkage. A Glycyl lysine isopeptide (Lys-Gly) (interchain with G-Cter in ubiquitin) cross-link involves residue Lys-164. 2 consecutive EF-hand domains span residues 184-219 (ACAQ…CFGH) and 304-339 (LGYQ…FPAA). Positions 197, 199, 201, 208, 317, 319, 321, and 328 each coordinate Ca(2+). The Miro 2 domain maps to 414-576 (RSVLLCKVVG…FTQLATMAAF (163 aa)). GTP contacts are provided by Gly-426, Gly-428, Lys-429, Ser-430, and Ala-431. Residues Gly-426, Gly-428, Lys-429, Ser-430, and Ala-431 each contribute to the GDP site. Mg(2+) is bound at residue Ser-430. Glu-471 is a binding site for Mg(2+). The GTP site is built by Lys-525, Asp-527, and Cys-556. 3 residues coordinate GDP: Lys-525, Asp-527, and Cys-556. The helical; Anchor for type IV membrane protein transmembrane segment at 593 to 615 (GLLGVVGAAVAAVLSFSLYRVLV) threads the bilayer. Topologically, residues 616 to 618 (KSQ) are mitochondrial intermembrane.

It belongs to the mitochondrial Rho GTPase family. Homodimer. Interacts with the kinesin-binding proteins TRAK1/OIP106 and TRAK2/GRIF1, forming a link between mitochondria and the trafficking apparatus of the microtubules. Interacts with ARMCX3. Found in a complex with KIF5B, OGT, RHOT1 and TRAK1. Ubiquitinated by PRKN in a PINK1-dependent manner, leading to its degradation. In terms of tissue distribution, ubiquitously expressed. Highly expressed in heart, liver, skeletal muscle, kidney and pancreas.

It localises to the mitochondrion outer membrane. It catalyses the reaction GTP + H2O = GDP + phosphate + H(+). The catalysed reaction is ATP + H2O = ADP + phosphate + H(+). It carries out the reaction UTP + H2O = UDP + phosphate + H(+). Its function is as follows. Atypical mitochondrial nucleoside-triphosphatase (NTPase) involved in mitochondrial trafficking. Probably involved in control of anterograde transport of mitochondria and their subcellular distribution. Can hydrolyze GTP. Can hydrolyze ATP and UTP. In Homo sapiens (Human), this protein is Mitochondrial Rho GTPase 2 (RHOT2).